Consider the following 268-residue polypeptide: Small ribosomal subunit protein uS2 (268 aa).

The tract at residues 233–268 (SVREEEFAEAAAEGEEKPARRAPAKKAAKKGDDAQA) is disordered.

Belongs to the universal ribosomal protein uS2 family.

This Stenotrophomonas maltophilia (strain K279a) protein is Small ribosomal subunit protein uS2.